The sequence spans 199 residues: 3-hexulose-6-phosphate isomerase (199 aa).

Residues 44–186 (LARQIVQPGR…FQSLWDHTEV (143 aa)) form the SIS domain. Substrate is bound by residues Ser-62 and 101 to 106 (SGSGTT). Glu-166 functions as the Proton acceptor in the catalytic mechanism.

Belongs to the SIS family. PHI subfamily.

It catalyses the reaction D-arabino-hex-3-ulose 6-phosphate = beta-D-fructose 6-phosphate. The protein operates within one-carbon metabolism; formaldehyde assimilation via RuMP pathway; D-fructose 6-phosphate from D-ribulose 5-phosphate and formaldehyde: step 2/2. In terms of biological role, catalyzes the isomerization between 3-hexulose 6-phosphate and fructose 6-phosphate. The sequence is that of 3-hexulose-6-phosphate isomerase (rmpB) from Mycobacterium gastri.